Reading from the N-terminus, the 248-residue chain is Probable 2-oxo-3-(5-oxofuran-2-ylidene)propanoate lactonase (248 aa).

Active-site residues include Cys123, Asp180, and His212.

This sequence belongs to the dienelactone hydrolase family.

The catalysed reaction is 2-oxo-3-(5-oxofuran-2-ylidene)propanoate + H2O = 3-maleylpyruvate + H(+). In terms of biological role, involved in the 5-nitroanthranilic acid (5NAA) degradation. Catalyzes the hydrolysis of the lactone to produce maleylpyruvate biodegradation of 5-nitroanthranilate. This Bradyrhizobium sp protein is Probable 2-oxo-3-(5-oxofuran-2-ylidene)propanoate lactonase (naaC).